A 422-amino-acid polypeptide reads, in one-letter code: Protein TEX1 (422 aa).

WD repeat units lie at residues 61–100 (ITPN…FDKS), 158–197 (GSKT…SSVC), 207–246 (EDND…LEVC), 251–290 (AHTG…CELI), and 293–332 (DLNS…LLHS). A disordered region spans residues 388–422 (KRRKNNGGGNNHNKRTSKNTDRIGKDRPSRFNSKK). A compositionally biased stretch (basic and acidic residues) spans 405–416 (KNTDRIGKDRPS).

The protein belongs to the THOC3 family. In terms of assembly, component of the transcription/export (TREX) complex and the THO complex.

It is found in the nucleus. Its function is as follows. Component of the TREX complex, which operates in coupling transcription elongation to mRNA export. This is Protein TEX1 (TEX1) from Saccharomyces cerevisiae (strain ATCC 204508 / S288c) (Baker's yeast).